Here is a 202-residue protein sequence, read N- to C-terminus: Transcriptional regulator GfcR 2 (202 aa).

This sequence belongs to the purine/pyrimidine phosphoribosyltransferase family. GfcR subfamily.

This chain is Transcriptional regulator GfcR 2, found in Methanosarcina barkeri (strain Fusaro / DSM 804).